The following is a 297-amino-acid chain: Bifunctional protein FolD 2 (297 aa).

NADP(+) is bound by residues 164-166, serine 193, and isoleucine 234; that span reads GRS.

Belongs to the tetrahydrofolate dehydrogenase/cyclohydrolase family. Homodimer.

The catalysed reaction is (6R)-5,10-methylene-5,6,7,8-tetrahydrofolate + NADP(+) = (6R)-5,10-methenyltetrahydrofolate + NADPH. It carries out the reaction (6R)-5,10-methenyltetrahydrofolate + H2O = (6R)-10-formyltetrahydrofolate + H(+). It functions in the pathway one-carbon metabolism; tetrahydrofolate interconversion. Catalyzes the oxidation of 5,10-methylenetetrahydrofolate to 5,10-methenyltetrahydrofolate and then the hydrolysis of 5,10-methenyltetrahydrofolate to 10-formyltetrahydrofolate. This chain is Bifunctional protein FolD 2, found in Haloarcula marismortui (strain ATCC 43049 / DSM 3752 / JCM 8966 / VKM B-1809) (Halobacterium marismortui).